Consider the following 474-residue polypeptide: Dol-P-Glc:Glc(2)Man(9)GlcNAc(2)-PP-Dol alpha-1,2-glucosyltransferase (474 aa).

At 1 to 6 (MAQLEG) the chain is on the cytoplasmic side. A helical membrane pass occupies residues 7–27 (YYFSAALSCTFLVSCLLFSAF). At 28–64 (SRALREPYMDEIFHLPQAQRYCEGRFSLSQWDPMITT) the chain is on the extracellular side. Residues 65 to 85 (LPGLYLVSVGVVKPASWILGW) form a helical membrane-spanning segment. At 86–97 (SEHVVCSIGMLR) the chain is on the cytoplasmic side. A helical membrane pass occupies residues 98–118 (FVNLLFSVGNFYLLYLLFRKI). Over 119–126 (QPRNKASS) the chain is Extracellular. Residues 127–147 (SIQRILSTLTLAVFPTLYFFN) form a helical membrane-spanning segment. The Cytoplasmic segment spans residues 148-150 (FLY). The helical transmembrane segment at 151–171 (YTEAGSVFFTLFAYLMCLYGN) threads the bilayer. At 172–175 (HRTS) the chain is on the extracellular side. The chain crosses the membrane as a helical span at residues 176–196 (ALLGFCGFMFRQTNIIWAAFC). Residues 197 to 256 (AGHIIAQKCSEAWKTELQKKKEERLPPAKGPLSELRRVLQFLLMYSMSLKNLSMLFLLTW) are Cytoplasmic-facing. The chain crosses the membrane as a helical span at residues 257-277 (PYMLLLLAFFVFVVVNGGIVV). The Extracellular segment spans residues 278 to 283 (GDRSSH). A helical membrane pass occupies residues 284–304 (EACLHFPQLFYFFSFTAFFSF). The Cytoplasmic portion of the chain corresponds to 305 to 317 (PHLLSPTKVKTFL). Residues 318–338 (SLVWKRRVQFSVITLVSVFLV) traverse the membrane as a helical segment. Over 339–365 (WKFTYVHKYLLADNRHYTFYVWKRVFQ) the chain is Extracellular. The chain crosses the membrane as a helical span at residues 366-386 (RHEIVKYLLVPAYMFAGWAVA). The Cytoplasmic portion of the chain corresponds to 387-392 (DSLKSK). The chain crosses the membrane as a helical span at residues 393–413 (SIFWNLMFFVCLVASTVPQKL). Over 414–436 (LEFRYFILPYIIYRLNMPLPPIS) the chain is Extracellular. Residues 437 to 457 (RLVCELGCYAVVNFLTFYIFL) form a helical membrane-spanning segment. Topologically, residues 458–473 (NKTFQWSDSHDIQRFM) are cytoplasmic.

It belongs to the ALG10 glucosyltransferase family. In terms of assembly, interacts with KCNH1; may regulate KCNH1, possibly by regulating its N-glycosylation. Interacts with KCNH2; may reduce KCNH2 sensitivity to classic proarrhythmic drug blockade, possibly by regulating its N-glycosylation. Highly expressed in brain, skeletal muscle, uterus, small intestine and liver. Moderately expressed in lung and kidney. Weakly expressed in heart and stomach.

It localises to the endoplasmic reticulum membrane. The catalysed reaction is an alpha-D-Glc-(1-&gt;3)-alpha-D-Glc-(1-&gt;3)-alpha-D-Man-(1-&gt;2)-alpha-D-Man-(1-&gt;2)-alpha-D-Man-(1-&gt;3)-[alpha-D-Man-(1-&gt;2)-alpha-D-Man-(1-&gt;3)-[alpha-D-Man-(1-&gt;2)-alpha-D-Man-(1-&gt;6)]-alpha-D-Man-(1-&gt;6)]-beta-D-Man-(1-&gt;4)-beta-D-GlcNAc-(1-&gt;4)-alpha-D-GlcNAc-diphospho-di-trans,poly-cis-dolichol + a di-trans,poly-cis-dolichyl beta-D-glucosyl phosphate = a alpha-D-Glc-(1-&gt;2)-alpha-D-Glc-(1-&gt;3)-alpha-D-Glc-(1-&gt;3)-alpha-D-Man-(1-&gt;2)-alpha-D-Man-(1-&gt;2)-alpha-D-Man-(1-&gt;3)-[alpha-D-Man-(1-&gt;2)-alpha-D-Man-(1-&gt;3)-[alpha-D-Man-(1-&gt;2)-alpha-D-Man-(1-&gt;6)]-alpha-D-Man-(1-&gt;6)]-beta-D-Man-(1-&gt;4)-beta-D-GlcNAc-(1-&gt;4)-alpha-D-GlcNAc-diphospho-di-trans,poly-cis-dolichol + a di-trans,poly-cis-dolichyl phosphate + H(+). It functions in the pathway protein modification; protein glycosylation. Its function is as follows. Dol-P-Glc:Glc(2)Man(9)GlcNAc(2)-PP-Dol alpha-1,2-glucosyltransferase that operates in the biosynthetic pathway of dolichol-linked oligosaccharides, the glycan precursors employed in protein asparagine (N)-glycosylation. The assembly of dolichol-linked oligosaccharides begins on the cytosolic side of the endoplasmic reticulum membrane and finishes in its lumen. The sequential addition of sugars to dolichol pyrophosphate produces dolichol-linked oligosaccharides containing fourteen sugars, including two GlcNAcs, nine mannoses and three glucoses. Once assembled, the oligosaccharide is transferred from the lipid to nascent proteins by oligosaccharyltransferases. In the lumen of the endoplasmic reticulum, adds the third and last glucose residue from dolichyl phosphate glucose (Dol-P-Glc) onto the lipid-linked oligosaccharide intermediate Glc(2)Man(9)GlcNAc(2)-PP-Dol to produce Glc(3)Man(9)GlcNAc(2)-PP-Dol. In Rattus norvegicus (Rat), this protein is Dol-P-Glc:Glc(2)Man(9)GlcNAc(2)-PP-Dol alpha-1,2-glucosyltransferase.